The sequence spans 184 residues: Large ribosomal subunit protein uL6 (184 aa).

This sequence belongs to the universal ribosomal protein uL6 family. Part of the 50S ribosomal subunit.

Its function is as follows. This protein binds to the 23S rRNA, and is important in its secondary structure. It is located near the subunit interface in the base of the L7/L12 stalk, and near the tRNA binding site of the peptidyltransferase center. The chain is Large ribosomal subunit protein uL6 from Thermosipho africanus (strain TCF52B).